The primary structure comprises 537 residues: MFS-type transporter qa-x (537 aa).

The Cytoplasmic portion of the chain corresponds to 1 to 26 (MTLLALKEDRPTPKAVYNWRVYTCAA). The chain crosses the membrane as a helical span at residues 27 to 47 (IASFASCMIGYDSAFIGTTLA). At 48-74 (LPSFTKEFDFASYTPGALALLQSNIVS) the chain is on the extracellular side. The chain crosses the membrane as a helical span at residues 75–95 (VYQAGAFFGCLFAYATSYFLG). Residues 96–98 (RRK) lie on the Cytoplasmic side of the membrane. Residues 99–119 (SLIAFSVVFIIGAAIMLAADG) form a helical membrane-spanning segment. The Extracellular portion of the chain corresponds to 120–131 (QGRGIDPIIAGR). A helical membrane pass occupies residues 132–152 (VLAGIGVGGASNMVPIYISEL). The Cytoplasmic portion of the chain corresponds to 153-160 (APPAVRGR). Residues 161 to 181 (LVGIYELGWQIGGLVGFWINY) form a helical membrane-spanning segment. Residues 182-195 (GVNTTMAPTRSQWL) lie on the Extracellular side of the membrane. Asn184 is a glycosylation site (N-linked (GlcNAc...) asparagine). A helical membrane pass occupies residues 196–216 (IPFAVQLIPAGLLFLGSFWIP). The Cytoplasmic portion of the chain corresponds to 217–285 (ESPRWLYANG…SLKQRKVQWR (69 aa)). Residues 286-306 (FFLGGMLFFWQNGSGINAINY) traverse the membrane as a helical segment. The Extracellular segment spans residues 307–327 (YSPTVFRSIGITGTDTGFLTT). A helical transmembrane segment spans residues 328–349 (GIFGVVKMVLTIIWLLWLVDLV). Residues 350–352 (GRR) are Cytoplasmic-facing. A helical transmembrane segment spans residues 353–373 (RILFIGAAGGSLCMWFIGAYI). The Extracellular segment spans residues 374 to 389 (KIADPGSNKAEDAKLT). Residues 390–410 (SGGIAAIFFFYLWTAFYTPSW) traverse the membrane as a helical segment. Residues 411–435 (NGTPWVINSEMFDQNTRSLGQASAA) lie on the Cytoplasmic side of the membrane. A helical transmembrane segment spans residues 436–456 (ANNWFWNFIISRFTPQMFIKM). The Extracellular portion of the chain corresponds to 457 to 458 (EY). A helical membrane pass occupies residues 459–479 (GVYFFFASLMLLSIVFIYFFL). The Cytoplasmic portion of the chain corresponds to 480–537 (PETKSIPLEAMDRLFEIKPVQNANKNLMAELNFDRNPEREESSSLDDKDRVTQTENAV). The segment covering 514–531 (RNPEREESSSLDDKDRVT) has biased composition (basic and acidic residues). The interval 514-537 (RNPEREESSSLDDKDRVTQTENAV) is disordered.

This sequence belongs to the major facilitator superfamily. Sugar transporter (TC 2.A.1.1) family.

It is found in the membrane. Its function is as follows. MFS-type transporter; part of the qa gene cluster that mediates the catabolism of quinic acid (QA) and as such, allows the use of QA as a sole carbon source. Involved in the upatke of QA. The qa cluster encodes 3 inducible enymes (qa-2, qa-3 and qa-4) catalyzing the first three reactions in the catabolism of quinic acid to protocatechuic acid (also known as 3,4-Dihydroxybenzoic acid). The protein is MFS-type transporter qa-x of Neurospora crassa (strain ATCC 24698 / 74-OR23-1A / CBS 708.71 / DSM 1257 / FGSC 987).